The chain runs to 324 residues: D-alanine--D-alanine ligase (324 aa).

One can recognise an ATP-grasp domain in the interval 120–322 (NNYLRGFGVE…LKEILTEIIE (203 aa)). 149 to 204 (IDKLGLPLIVKPNDGGSSFGVTKVTNITQIQLAIRNAFNEGEGVLIESFIPGTEIT) serves as a coordination point for ATP. Mg(2+)-binding residues include Asp-276, Glu-289, and Asn-291.

This sequence belongs to the D-alanine--D-alanine ligase family. Mg(2+) serves as cofactor. The cofactor is Mn(2+).

The protein localises to the cytoplasm. It catalyses the reaction 2 D-alanine + ATP = D-alanyl-D-alanine + ADP + phosphate + H(+). It participates in cell wall biogenesis; peptidoglycan biosynthesis. Its function is as follows. Cell wall formation. In Azobacteroides pseudotrichonymphae genomovar. CFP2, this protein is D-alanine--D-alanine ligase.